The following is a 372-amino-acid chain: Glutamate 5-kinase (372 aa).

Lysine 9 lines the ATP pocket. Substrate contacts are provided by serine 49, aspartate 136, and asparagine 148. Residues 168 to 169 (TD) and 210 to 216 (TGGMKSK) contribute to the ATP site. The PUA domain maps to 276 to 360 (EGKVFIDDGA…PAIEVIHRDS (85 aa)).

It belongs to the glutamate 5-kinase family.

The protein resides in the cytoplasm. The enzyme catalyses L-glutamate + ATP = L-glutamyl 5-phosphate + ADP. Its pathway is amino-acid biosynthesis; L-proline biosynthesis; L-glutamate 5-semialdehyde from L-glutamate: step 1/2. In terms of biological role, catalyzes the transfer of a phosphate group to glutamate to form L-glutamate 5-phosphate. This Oceanobacillus iheyensis (strain DSM 14371 / CIP 107618 / JCM 11309 / KCTC 3954 / HTE831) protein is Glutamate 5-kinase.